A 141-amino-acid polypeptide reads, in one-letter code: Large ribosomal subunit protein uL11 (141 aa).

The protein belongs to the universal ribosomal protein uL11 family. In terms of assembly, part of the ribosomal stalk of the 50S ribosomal subunit. Interacts with L10 and the large rRNA to form the base of the stalk. L10 forms an elongated spine to which L12 dimers bind in a sequential fashion forming a multimeric L10(L12)X complex. One or more lysine residues are methylated.

In terms of biological role, forms part of the ribosomal stalk which helps the ribosome interact with GTP-bound translation factors. This chain is Large ribosomal subunit protein uL11, found in Chlamydia felis (strain Fe/C-56) (Chlamydophila felis).